The chain runs to 914 residues: DNA mismatch repair protein MutS (914 aa).

Positions 1–25 are disordered; sequence MDKKNDHKNNLIPQPASSFASSQER. Over residues 11-25 the composition is skewed to polar residues; the sequence is LIPQPASSFASSQER. Residue 662-669 participates in ATP binding; it reads GPNMGGKS.

This sequence belongs to the DNA mismatch repair MutS family.

Functionally, this protein is involved in the repair of mismatches in DNA. It is possible that it carries out the mismatch recognition step. This protein has a weak ATPase activity. This chain is DNA mismatch repair protein MutS, found in Bartonella tribocorum (strain CIP 105476 / IBS 506).